The following is a 293-amino-acid chain: MPWIQLKLNTTGANAEELSDALMEAGAVSITFQDTHDTPVFEPLPGETRLWGDTDVIGLFDAETDMKDVVAILEQHPLLGAGFAHKIEQLEDKDWEREWMDNFHPMRFGERLWICPSWRDIPDENAVNVMLDPGLAFGTGTHPTTSLCLQWLDGLDLNGKTVIDFGCGSGILAIAALKLGAAKAIGIDIDPQAIQASRDNAERNGVSDRLELYLPKDQPEAMKADVVVANILAGPLRELAPLISVLPVEGGLLGLSGILASQAESICDAYAELFTLDPVVEKEEWCRITGRKK.

Residues threonine 145, glycine 166, aspartate 188, and asparagine 230 each contribute to the S-adenosyl-L-methionine site.

This sequence belongs to the methyltransferase superfamily. PrmA family.

It localises to the cytoplasm. The catalysed reaction is L-lysyl-[protein] + 3 S-adenosyl-L-methionine = N(6),N(6),N(6)-trimethyl-L-lysyl-[protein] + 3 S-adenosyl-L-homocysteine + 3 H(+). Its function is as follows. Methylates ribosomal protein L11. The chain is Ribosomal protein L11 methyltransferase from Salmonella newport (strain SL254).